The sequence spans 67 residues: Large ribosomal subunit protein bL35 (67 aa).

It belongs to the bacterial ribosomal protein bL35 family.

The protein is Large ribosomal subunit protein bL35 of Rhizorhabdus wittichii (strain DSM 6014 / CCUG 31198 / JCM 15750 / NBRC 105917 / EY 4224 / RW1) (Sphingomonas wittichii).